A 1174-amino-acid polypeptide reads, in one-letter code: HEAT repeat-containing protein 6 (1174 aa).

An HEAT 1 repeat occupies 168–207 (NELLGPTGILVNLCDPSQPDPELWREAIHCMANLCLGVPG). 2 disordered regions span residues 304 to 346 (GRSP…EELK) and 373 to 392 (LGPQ…KDHF). A compositionally biased stretch (basic residues) spans 323 to 335 (SKKKRKAGKQKKG). A compositionally biased stretch (basic and acidic residues) spans 336–346 (HQGEESKEELK). 3 HEAT repeats span residues 460 to 498 (GIGS…GSKQ), 523 to 560 (SIRE…NAPY), and 566 to 603 (GLLT…AQVS). The interval 619–648 (SQNSGSATPSDPESNRKESMLEGGKKNGLH) is disordered. The span at 631–648 (ESNRKESMLEGGKKNGLH) shows a compositional bias: basic and acidic residues.

The sequence is that of HEAT repeat-containing protein 6 (heatr6) from Xenopus laevis (African clawed frog).